Consider the following 350-residue polypeptide: Protein-arginine kinase (350 aa).

The 233-residue stretch at 21 to 253 folds into the Phosphagen kinase C-terminal domain; that stretch reads IVISSRIRLA…VRLADQEREA (233 aa). ATP-binding positions include 24–28, histidine 90, arginine 124, 175–179, and 206–211; these read SSRIR, RASTM, and RGLYGE. The short motif at 336–341 is the RDXXRA motif of the pArg binding pocket involved in allosteric regulation element; sequence RDVHRA.

Belongs to the ATP:guanido phosphotransferase family.

It carries out the reaction L-arginyl-[protein] + ATP = N(omega)-phospho-L-arginyl-[protein] + ADP + H(+). Appears to be allosterically activated by the binding of pArg-containing polypeptides to the pArg-binding pocket localized in the C-terminal domain of McsB. Its function is as follows. Catalyzes the specific phosphorylation of arginine residues in proteins. This chain is Protein-arginine kinase, found in Moorella thermoacetica (strain ATCC 39073 / JCM 9320).